Here is a 911-residue protein sequence, read N- to C-terminus: MAASQTSQTVASHVPFADLCSTLERIQKSKGRAEKIRHFREFLDSWRKFHDALHKNHKDVTDSFYPAMRLILPQLERERMAYGIKETMLAKLYIELLNLPRDGKDALKLLNYRTPTGTHGDAGDFAMIAYFVLKPRCLQKGSLTIQQVNDLLDSIASNNSAKRKDLIKKSLLQLITQSSALEQKWLIRMIIKDLKLGVSQQTIFSVFHNDAAELHNVTTDLEKVCRQLHDPSVGLSDISITLFSAFKPMLAAIADIEHIEKDMKHQSFYIETKLDGERMQMHKDGDVYKYFSRNGYNYTDQFGASPTEGSLTPFIHNAFKADIQICILDGEMMAYNPNTQTFMQKGTKFDIKRMVEDSDLQTCYCVFDVLMVNNKKLGHETLRKRYEILSSIFTPIPGRIEIVQKTQAHTKNEVIDALNEAIDKREEGIMVKQPLSIYKPDKRGEGWLKIKPEYVSGLMDELDILIVGGYWGKGSRGGMMSHFLCAVAEKPPPGEKPSVFHTLSRVGSGCTMKELYDLGLKLAKYWKPFHRKAPPSSILCGTEKPEVYIEPCNSVIVQIKAAEIVPSDMYKTGCTLRFPRIEKIRDDKEWHECMTLDDLEQLRGKASGKLASKHLYIGGDDEPQEKKRKAAPKMKKVIGIIEHLKAPNLTNVNKISNIFEDVEFCVMSGTDSQPKPDLENRIAEFGGYIVQNPGPDTYCVIAGSENIRVKNIILSNKHDVVKPAWLLECFKTKSFVPWQPRFMIHMCPSTKEHFAREYDCYGDSYFIDTDLNQLKEVFSGIKNSNEQTPEEMASLIADLEYRYSWDCSPLSMFRRHTVYLDSYAVINDLSTKNEGTRLAIKALELRFHGAKVVSCLAEGVSHVIIGEDHSRVADFKAFRRTFKRKFKILKESWVTDSIDKCELQEENQYLI.

Glu271, Thr272, Lys273, Leu274, Arg278, Glu331, Lys345, Phe367, Glu427, Lys432, Lys449, and Lys451 together coordinate ATP. Lys273 (N6-AMP-lysine intermediate) is an active-site residue. Glu331 serves as a coordination point for Mg(2+). Position 427 (Glu427) interacts with Mg(2+). The tract at residues 610 to 620 is required for catalytic activity; sequence LASKHLYIGGD. BRCT domains lie at 654–743 and 808–911; these read KISN…PRFM and SPLS…QYLI.

This sequence belongs to the ATP-dependent DNA ligase family. Interacts with XRCC4; the LIG4-XRCC4 subcomplex has a 1:2 stoichiometry and XRCC4 is required for LIG4 stability. Component of the core long-range non-homologous end joining (NHEJ) complex (also named DNA-PK complex) composed of PRKDC, LIG4, XRCC4, XRCC6/Ku70, XRCC5/Ku86 and NHEJ1/XLF. Additional component of the NHEJ complex includes PAXX. Following autophosphorylation, PRKDC dissociates from DNA, leading to formation of the short-range NHEJ complex, composed of LIG4, XRCC4, XRCC6/Ku70, XRCC5/Ku86 and NHEJ1/XLF. Interacts with DCLRE1C; the interaction is direct. Interacts with APLF. It depends on Mg(2+) as a cofactor. Testis, thymus, prostate and heart.

It localises to the nucleus. The catalysed reaction is ATP + (deoxyribonucleotide)n-3'-hydroxyl + 5'-phospho-(deoxyribonucleotide)m = (deoxyribonucleotide)n+m + AMP + diphosphate.. Functionally, DNA ligase involved in DNA non-homologous end joining (NHEJ); required for double-strand break (DSB) repair and V(D)J recombination. Catalyzes the NHEJ ligation step of the broken DNA during DSB repair by resealing the DNA breaks after the gap filling is completed. Joins single-strand breaks in a double-stranded polydeoxynucleotide in an ATP-dependent reaction. LIG4 is mechanistically flexible: it can ligate nicks as well as compatible DNA overhangs alone, while in the presence of XRCC4, it can ligate ends with 2-nucleotides (nt) microhomology and 1-nt gaps. Forms a subcomplex with XRCC4; the LIG4-XRCC4 subcomplex is responsible for the NHEJ ligation step and XRCC4 enhances the joining activity of LIG4. Binding of the LIG4-XRCC4 complex to DNA ends is dependent on the assembly of the DNA-dependent protein kinase complex DNA-PK to these DNA ends. LIG4 regulates nuclear localization of XRCC4. In Homo sapiens (Human), this protein is DNA ligase 4.